The chain runs to 317 residues: Malate dehydrogenase (317 aa).

Residues 13 to 18 (GAGNIG) and Asp-38 each bind NAD(+). Residues Arg-87 and Arg-93 each coordinate substrate. Residues Asn-100 and 123-125 (VTN) contribute to the NAD(+) site. Substrate is bound by residues Asn-125 and Arg-156. The active-site Proton acceptor is His-180.

It belongs to the LDH/MDH superfamily. MDH type 3 family.

It catalyses the reaction (S)-malate + NAD(+) = oxaloacetate + NADH + H(+). Its function is as follows. Catalyzes the reversible oxidation of malate to oxaloacetate. In Anaplasma marginale (strain Florida), this protein is Malate dehydrogenase.